Consider the following 608-residue polypeptide: Chaperone protein DnaK (608 aa).

Threonine 175 carries the phosphothreonine; by autocatalysis modification.

It belongs to the heat shock protein 70 family.

In terms of biological role, acts as a chaperone. This chain is Chaperone protein DnaK, found in Finegoldia magna (strain ATCC 29328 / DSM 20472 / WAL 2508) (Peptostreptococcus magnus).